The sequence spans 254 residues: Peptide methionine sulfoxide reductase A5 (254 aa).

The N-terminal stretch at 1–33 (MAISLKRNRFFIPYTNLVFFFFLCVSLLDKTVS) is a signal peptide.

This sequence belongs to the MsrA Met sulfoxide reductase family.

It catalyses the reaction L-methionyl-[protein] + [thioredoxin]-disulfide + H2O = L-methionyl-(S)-S-oxide-[protein] + [thioredoxin]-dithiol. It carries out the reaction [thioredoxin]-disulfide + L-methionine + H2O = L-methionine (S)-S-oxide + [thioredoxin]-dithiol. Functionally, catalyzes the reduction of methionine sulfoxide (MetSO) to methionine in proteins. Plays a protective role against oxidative stress by restoring activity to proteins that have been inactivated by methionine oxidation. MSRA family specifically reduces the MetSO S-enantiomer. The protein is Peptide methionine sulfoxide reductase A5 (MSRA5) of Arabidopsis thaliana (Mouse-ear cress).